The chain runs to 125 residues: Casein kinase I isoform alpha (125 aa).

The region spanning 1 to 125 (GEEVAVKLES…LIDFGLAKKY (125 aa)) is the Protein kinase domain. Lys-7 contacts ATP. Catalysis depends on Asp-97, which acts as the Proton acceptor.

This sequence belongs to the protein kinase superfamily. CK1 Ser/Thr protein kinase family. Casein kinase I subfamily. In terms of assembly, interacts with the Axin complex. Interacts with TUT1, leading to TUT1 phosphorylation. Interacts with FAM83A, FAM83B, FAM83C, FAM83D, FAM83E, FAM83F, FAM83G and FAM83H (via DUF1669). Interaction with FAM83H recruits CSNK1A1 to keratin filaments. Post-translationally, phosphorylated by MTOR in response to mitogenic stimulation, leading to its activation.

The protein localises to the cytoplasm. It is found in the cytoskeleton. The protein resides in the microtubule organizing center. It localises to the centrosome. Its subcellular location is the chromosome. The protein localises to the centromere. It is found in the kinetochore. The protein resides in the nucleus speckle. It localises to the cilium basal body. Its subcellular location is the spindle. The catalysed reaction is L-seryl-[protein] + ATP = O-phospho-L-seryl-[protein] + ADP + H(+). It catalyses the reaction L-threonyl-[protein] + ATP = O-phospho-L-threonyl-[protein] + ADP + H(+). Casein kinases are operationally defined by their preferential utilization of acidic proteins such as caseins as substrates. It can phosphorylate a large number of proteins. Participates in Wnt signaling. Phosphorylates CTNNB1 at 'Ser-45'. May phosphorylate PER1 and PER2. May play a role in segregating chromosomes during mitosis. May play a role in keratin cytoskeleton disassembly and thereby, it may regulate epithelial cell migration. Acts as a positive regulator of mTORC1 and mTORC2 signaling in response to nutrients by mediating phosphorylation of DEPTOR inhibitor. Acts as an inhibitor of NLRP3 inflammasome assembly by mediating phosphorylation of NLRP3. This chain is Casein kinase I isoform alpha (CSNK1A1), found in Sus scrofa (Pig).